Consider the following 200-residue polypeptide: NADH-quinone oxidoreductase subunit B (200 aa).

[4Fe-4S] cluster contacts are provided by cysteine 78, cysteine 79, cysteine 144, and cysteine 174.

It belongs to the complex I 20 kDa subunit family. As to quaternary structure, NDH-1 is composed of 14 different subunits. Subunits NuoB, C, D, E, F, and G constitute the peripheral sector of the complex. [4Fe-4S] cluster is required as a cofactor.

It localises to the cell membrane. The enzyme catalyses a quinone + NADH + 5 H(+)(in) = a quinol + NAD(+) + 4 H(+)(out). Its function is as follows. NDH-1 shuttles electrons from NADH, via FMN and iron-sulfur (Fe-S) centers, to quinones in the respiratory chain. The immediate electron acceptor for the enzyme in this species is believed to be ubiquinone. Couples the redox reaction to proton translocation (for every two electrons transferred, four hydrogen ions are translocated across the cytoplasmic membrane), and thus conserves the redox energy in a proton gradient. In Dehalococcoides mccartyi (strain ATCC BAA-2266 / KCTC 15142 / 195) (Dehalococcoides ethenogenes (strain 195)), this protein is NADH-quinone oxidoreductase subunit B.